Reading from the N-terminus, the 60-residue chain is Large ribosomal subunit protein bL32 (60 aa).

The segment covering 1-23 (MAKHPVPKKKTSKSKRDMRRSHH) has biased composition (basic residues). A disordered region spans residues 1–34 (MAKHPVPKKKTSKSKRDMRRSHHALTAPNLTECP). Cysteine 33, cysteine 36, cysteine 46, and cysteine 49 together coordinate Zn(2+). A C4-type zinc finger spans residues 33–49 (CPQCHGKKLSHHICPNC).

This sequence belongs to the bacterial ribosomal protein bL32 family. In terms of assembly, part of the 50S ribosomal subunit. Contacts proteins L17 and L22. The cofactor is Zn(2+).

Forms a cluster with L17 and L22, and with L22, a pair of 'tweezers' that hold together all the domains of the 23S rRNA. Interacts with the antibiotic troleandomycin which blocks the peptide exit tunnel. In Deinococcus radiodurans (strain ATCC 13939 / DSM 20539 / JCM 16871 / CCUG 27074 / LMG 4051 / NBRC 15346 / NCIMB 9279 / VKM B-1422 / R1), this protein is Large ribosomal subunit protein bL32 (rpmF).